A 147-amino-acid polypeptide reads, in one-letter code: Hemoglobin anodic subunit beta (147 aa).

A Globin domain is found at 2-147 (EWTDGERTAI…VTSALARQYH (146 aa)). The heme b site is built by histidine 63 and histidine 92.

The protein belongs to the globin family. Heterotetramer of two alpha chains and two beta chains. In terms of tissue distribution, red blood cells.

Involved in oxygen transport from gills to the various peripheral tissues. This chain is Hemoglobin anodic subunit beta, found in Gymnothorax unicolor (Brown moray).